The chain runs to 366 residues: UDP-N-acetylglucosamine--N-acetylmuramyl-(pentapeptide) pyrophosphoryl-undecaprenol N-acetylglucosamine transferase (366 aa).

Residues 14 to 16 (TGG), asparagine 125, arginine 168, serine 196, and glutamine 297 contribute to the UDP-N-acetyl-alpha-D-glucosamine site.

This sequence belongs to the glycosyltransferase 28 family. MurG subfamily.

The protein localises to the cell inner membrane. The catalysed reaction is di-trans,octa-cis-undecaprenyl diphospho-N-acetyl-alpha-D-muramoyl-L-alanyl-D-glutamyl-meso-2,6-diaminopimeloyl-D-alanyl-D-alanine + UDP-N-acetyl-alpha-D-glucosamine = di-trans,octa-cis-undecaprenyl diphospho-[N-acetyl-alpha-D-glucosaminyl-(1-&gt;4)]-N-acetyl-alpha-D-muramoyl-L-alanyl-D-glutamyl-meso-2,6-diaminopimeloyl-D-alanyl-D-alanine + UDP + H(+). It participates in cell wall biogenesis; peptidoglycan biosynthesis. Its function is as follows. Cell wall formation. Catalyzes the transfer of a GlcNAc subunit on undecaprenyl-pyrophosphoryl-MurNAc-pentapeptide (lipid intermediate I) to form undecaprenyl-pyrophosphoryl-MurNAc-(pentapeptide)GlcNAc (lipid intermediate II). The chain is UDP-N-acetylglucosamine--N-acetylmuramyl-(pentapeptide) pyrophosphoryl-undecaprenol N-acetylglucosamine transferase from Bradyrhizobium diazoefficiens (strain JCM 10833 / BCRC 13528 / IAM 13628 / NBRC 14792 / USDA 110).